The chain runs to 271 residues: Formamidopyrimidine-DNA glycosylase (271 aa).

P2 serves as the catalytic Schiff-base intermediate with DNA. Catalysis depends on E3, which acts as the Proton donor. The Proton donor; for beta-elimination activity role is filled by K57. DNA contacts are provided by H90, R109, and K150. The segment at 235–269 (LVYGNKDKPCPKCGGKIESLIIGQRNSFFCPKCQK) adopts an FPG-type zinc-finger fold. Residue R259 is the Proton donor; for delta-elimination activity of the active site.

The protein belongs to the FPG family. Monomer. Requires Zn(2+) as cofactor.

It catalyses the reaction Hydrolysis of DNA containing ring-opened 7-methylguanine residues, releasing 2,6-diamino-4-hydroxy-5-(N-methyl)formamidopyrimidine.. It carries out the reaction 2'-deoxyribonucleotide-(2'-deoxyribose 5'-phosphate)-2'-deoxyribonucleotide-DNA = a 3'-end 2'-deoxyribonucleotide-(2,3-dehydro-2,3-deoxyribose 5'-phosphate)-DNA + a 5'-end 5'-phospho-2'-deoxyribonucleoside-DNA + H(+). Functionally, involved in base excision repair of DNA damaged by oxidation or by mutagenic agents. Acts as a DNA glycosylase that recognizes and removes damaged bases. Has a preference for oxidized purines, such as 7,8-dihydro-8-oxoguanine (8-oxoG). Has AP (apurinic/apyrimidinic) lyase activity and introduces nicks in the DNA strand. Cleaves the DNA backbone by beta-delta elimination to generate a single-strand break at the site of the removed base with both 3'- and 5'-phosphates. The polypeptide is Formamidopyrimidine-DNA glycosylase (Haemophilus influenzae (strain 86-028NP)).